A 56-amino-acid chain; its full sequence is Cytochrome b-c1 complex subunit 10 (56 aa).

The Mitochondrial matrix portion of the chain corresponds to 1 to 12 (MVTRFLGPRYRE). Residues 13–35 (LVKNWVPTAYTWGAVGAVGLVWA) traverse the membrane as a helical segment. At 36–56 (TDWRLILDWVPYINGKFKKDN) the chain is on the mitochondrial intermembrane side.

This sequence belongs to the UQCR11/QCR10 family. As to quaternary structure, component of the ubiquinol-cytochrome c oxidoreductase (cytochrome b-c1 complex, complex III, CIII), a multisubunit enzyme composed of 11 subunits. The complex is composed of 3 respiratory subunits cytochrome b, cytochrome c1 and Rieske protein UQCRFS1, 2 core protein subunits UQCRC1/QCR1 and UQCRC2/QCR2, and 6 low-molecular weight protein subunits UQCRH/QCR6, UQCRB/QCR7, UQCRQ/QCR8, UQCR10/QCR9, UQCR11/QCR10 and subunit 9, the cleavage product of Rieske protein UQCRFS1. The complex exists as an obligatory dimer and forms supercomplexes (SCs) in the inner mitochondrial membrane with NADH-ubiquinone oxidoreductase (complex I, CI) and cytochrome c oxidase (complex IV, CIV), resulting in different assemblies (supercomplex SCI(1)III(2)IV(1) and megacomplex MCI(2)III(2)IV(2)).

The protein resides in the mitochondrion inner membrane. Functionally, component of the ubiquinol-cytochrome c oxidoreductase, a multisubunit transmembrane complex that is part of the mitochondrial electron transport chain which drives oxidative phosphorylation. The respiratory chain contains 3 multisubunit complexes succinate dehydrogenase (complex II, CII), ubiquinol-cytochrome c oxidoreductase (cytochrome b-c1 complex, complex III, CIII) and cytochrome c oxidase (complex IV, CIV), that cooperate to transfer electrons derived from NADH and succinate to molecular oxygen, creating an electrochemical gradient over the inner membrane that drives transmembrane transport and the ATP synthase. The cytochrome b-c1 complex catalyzes electron transfer from ubiquinol to cytochrome c, linking this redox reaction to translocation of protons across the mitochondrial inner membrane, with protons being carried across the membrane as hydrogens on the quinol. In the process called Q cycle, 2 protons are consumed from the matrix, 4 protons are released into the intermembrane space and 2 electrons are passed to cytochrome c. QCR10 has a role in CIII assembly and RIP1 stability. This chain is Cytochrome b-c1 complex subunit 10 (UQCR11), found in Homo sapiens (Human).